Here is a 270-residue protein sequence, read N- to C-terminus: Hydroxyethylthiazole kinase (270 aa).

Position 47 (Met47) interacts with substrate. The ATP site is built by Arg123 and Thr169. Gly196 serves as a coordination point for substrate.

This sequence belongs to the Thz kinase family. Requires Mg(2+) as cofactor.

The enzyme catalyses 5-(2-hydroxyethyl)-4-methylthiazole + ATP = 4-methyl-5-(2-phosphooxyethyl)-thiazole + ADP + H(+). Its pathway is cofactor biosynthesis; thiamine diphosphate biosynthesis; 4-methyl-5-(2-phosphoethyl)-thiazole from 5-(2-hydroxyethyl)-4-methylthiazole: step 1/1. Its function is as follows. Catalyzes the phosphorylation of the hydroxyl group of 4-methyl-5-beta-hydroxyethylthiazole (THZ). This Roseiflexus sp. (strain RS-1) protein is Hydroxyethylthiazole kinase.